Here is a 1196-residue protein sequence, read N- to C-terminus: Protein BRASSINOSTEROID INSENSITIVE 1 (1196 aa).

The first 23 residues, 1–23 (MKTFSSFFLSVTTLFFFSFFSLS), serve as a signal peptide directing secretion. The Cys pair 1 signature appears at 62 to 69 (CTFDGVTC). 21 LRR repeats span residues 71–98 (DDKV…LLSL), 99–121 (TGLE…FKCS), 122–146 (ASLT…SLGS), 148–169 (SGLK…VSGG), 172–197 (LNSL…VLSD), 199–221 (CGEL…VSRC), 222–244 (VNLE…LGDC), 245–268 (SALQ…ISTC), 269–290 (TELK…PLPL), 291–314 (KSLQ…LSGA), 316–338 (DTLT…FFGS), 339–363 (CSLL…TLLK), 364–388 (MRGL…LTNL), 390–413 (ASLL…LCQN), 415–439 (KNTL…LSNC), 441–463 (ELVS…LGSL), 464–487 (SKLR…LMYV), 488–511 (KTLE…LSNC), 513–535 (NLNW…IGRL), 536–559 (ENLA…LGDC), and 561–583 (SLIW…MFKQ). Asparagine 112 carries an N-linked (GlcNAc...) asparagine glycan. N-linked (GlcNAc...) asparagine glycosylation is present at asparagine 154. Asparagine 233 is a glycosylation site (N-linked (GlcNAc...) asparagine). N-linked (GlcNAc...) asparagine glycosylation is present at asparagine 275. N-linked (GlcNAc...) asparagine glycosylation is found at asparagine 351, asparagine 387, asparagine 401, and asparagine 438. An N-linked (GlcNAc...) asparagine glycan is attached at asparagine 510. N-linked (GlcNAc...) asparagine glycans are attached at residues asparagine 545 and asparagine 573. Tyrosine 597 contributes to the brassinolide binding site. The N-linked (GlcNAc...) asparagine glycan is linked to asparagine 636. Residues 640–642 (RVY) form an SERK1 binding region. 2 residues coordinate brassinolide: tyrosine 642 and serine 647. The N-linked (GlcNAc...) asparagine glycan is linked to asparagine 653. LRR repeat units lie at residues 653-677 (NGSM…IGSM), 678-701 (PYLF…VGDL), 702-725 (RGLN…MSAL), and 727-750 (MLTE…QFET). Residue asparagine 705 coordinates brassinolide. The SERK1 binding stretch occupies residues 726–729 (TMLT). Residue asparagine 737 is glycosylated (N-linked (GlcNAc...) asparagine). An SERK1 binding region spans residues 746 to 750 (GQFET). Positions 763–770 (CGYPLPRC) match the Cys pair 2 motif. A helical membrane pass occupies residues 793–813 (AGSVAMGLLFSFVCIFGLILV). The residue at position 831 (tyrosine 831) is a Phosphotyrosine. A Phosphoserine modification is found at serine 838. Phosphothreonine is present on residues threonine 842, threonine 846, and threonine 851. Serine 858 is subject to Phosphoserine. Threonine 872 and threonine 880 each carry phosphothreonine. Residues 883-1158 (FHNDSLIGSG…VQVMAMFKEI (276 aa)) enclose the Protein kinase domain. A phosphoserine mark is found at serine 887 and serine 891. ATP contacts are provided by residues 889–897 (IGSGGFGDV) and lysine 911. A Phosphotyrosine modification is found at tyrosine 956. ATP-binding positions include 957-959 (EFM) and 963-966 (SLED). Serine 981 carries the post-translational modification Phosphoserine. Threonine 982 carries the post-translational modification Phosphothreonine. The Proton acceptor role is filled by aspartate 1009. ATP is bound by residues 1009-1014 (DMKSSN) and aspartate 1027. Serine 1035 carries the phosphoserine modification. Threonine 1039 bears the Phosphothreonine mark. A phosphoserine mark is found at serine 1042 and serine 1044. Phosphothreonine occurs at positions 1045 and 1049. Tyrosine 1052 bears the Phosphotyrosine mark. Serine 1060 bears the Phosphoserine mark. Tyrosine 1072 carries the post-translational modification Phosphotyrosine. Phosphoserine occurs at positions 1166 and 1168. The residue at position 1169 (threonine 1169) is a Phosphothreonine. Phosphoserine is present on residues serine 1172 and serine 1179. Threonine 1180 is modified (phosphothreonine). Phosphoserine is present on serine 1187.

Belongs to the protein kinase superfamily. Ser/Thr protein kinase family. As to quaternary structure, monomer or homodimer in the plasma membrane. Heterodimer with BAK1 in the endosomes. Interacts with SERK1 and TTL in a kinase-dependent manner. Bind to SERK1 in a brassinolide-dependent manner. Component of the SERK1 signaling complex, composed of KAPP, CDC48A, GRF6 or GRF7, SERK1, SERK2, SERK3/BAK1 and BRI1. Interacts with CDG1. No interactions with PSKR1 or CNGC17. Interacts with BIK1. Interacts with B'ALPHA, B'BETA, B'GAMMA and B'ETA. Interacts with BSK1 and BSK3. Interacts with BSK5, BSK6 and BSK11. Post-translationally, autophosphorylated on Tyr-831, Tyr-956 and maybe Tyr-1072. Phosphorylated on at least 12 sites, with a preference for Ser residues. Transphosphorylated on Ser-887 by SERK1 and on Ser-838, Thr-846, Ser-858 and Ser-1166 by BAK1. Phosphorylation on Ser-1166 enhances the kinase activity. Glycosylated. Expressed ubiquitously.

It localises to the cell membrane. Its subcellular location is the endosome membrane. It catalyses the reaction L-seryl-[protein] + ATP = O-phospho-L-seryl-[protein] + ADP + H(+). It carries out the reaction L-threonyl-[protein] + ATP = O-phospho-L-threonyl-[protein] + ADP + H(+). The catalysed reaction is L-tyrosyl-[protein] + ATP = O-phospho-L-tyrosyl-[protein] + ADP + H(+). With respect to regulation, activated by Ser and Thr phosphorylation. Receptor with a dual specificity kinase activity acting on both serine/threonine- and tyrosine-containing substrates. Regulates, in response to brassinosteroid binding, a signaling cascade involved in plant development, including expression of light- and stress-regulated genes, promotion of cell elongation, normal leaf and chloroplast senescence, and flowering. Binds brassinolide (BL), and less effectively castasterone (CS), but not 2,3,22,23-O-tetramethylbrassinolide or ecdysone. May be involved in a feedback regulation of brassinosteroid biosynthesis. Phosphorylates BRI1-associated receptor kinase 1 (BAK1), Transthyretin-Like protein (TTL) and SERK1 on 'Ser-299' and 'Thr-462' in vitro. May have a guanylyl cyclase activity. Phosphorylates BSK1, BSK2 and BSK3 in vitro. Phosphorylates BSK1, BSK3, BSK5, BSK6, BSK8 and BSK11 in vitro. This is Protein BRASSINOSTEROID INSENSITIVE 1 from Arabidopsis thaliana (Mouse-ear cress).